A 190-amino-acid polypeptide reads, in one-letter code: Elongation factor P-like protein (190 aa).

Belongs to the elongation factor P family.

The polypeptide is Elongation factor P-like protein (Citrobacter koseri (strain ATCC BAA-895 / CDC 4225-83 / SGSC4696)).